Here is a 439-residue protein sequence, read N- to C-terminus: Putrescine transporter PotE (439 aa).

12 consecutive transmembrane segments (helical) span residues 10–30, 40–60, 91–111, 114–134, 152–172, 186–206, 225–245, 276–296, 321–341, 354–374, 387–407, and 410–430; these read GVVQ…IIML, ISII…WAFA, TYGV…VGYG, LLGA…VLWI, ITVW…WFWF, APFF…FLGL, IAVL…TNVI, VIMA…QFTI, APVQ…LMTI, NLAV…LVII, VANF…YSSG, and AMLY…LVSP.

This sequence belongs to the amino acid-polyamine-organocation (APC) superfamily. Basic amino acid/polyamine antiporter (APA) (TC 2.A.3.2) family.

The protein localises to the cell inner membrane. The enzyme catalyses putrescine(in) + H(+)(in) = putrescine(out) + H(+)(out). It catalyses the reaction putrescine(in) + L-ornithine(out) = putrescine(out) + L-ornithine(in). Functionally, catalyzes both the uptake and excretion of putrescine. The uptake of putrescine is dependent on the membrane potential and the excretion involves putrescine-ornithine antiporter activity. The protein is Putrescine transporter PotE of Escherichia coli O6:H1 (strain CFT073 / ATCC 700928 / UPEC).